We begin with the raw amino-acid sequence, 2605 residues long: Non-reducing polyketide synthase dbaI (2605 aa).

The interval 97–243 (PNTLLIPLVM…PASEISDLHR (147 aa)) is N-terminal acylcarrier protein transacylase domain (SAT). Cys-144 functions as the Nucleophile; for transacylase activity in the catalytic mechanism. The Proton donor/acceptor; for transacylase activity role is filled by His-262. Positions 382 to 798 (ENDIAVVGMS…GSNASIVVTQ (417 aa)) constitute a Ketosynthase family 3 (KS3) domain. Catalysis depends on for beta-ketoacyl synthase activity residues Cys-547, His-682, and His-721. The segment at 908 to 1195 (FGGQVSTFVG…VTNMASRALG (288 aa)) is malonyl-CoA:ACP transacylase (MAT) domain. The segment at 1285 to 1420 (PNTLLTFVGY…GRVIFRSISD (136 aa)) is N-terminal hotdog fold. Positions 1285-1596 (PNTLLTFVGY…YVKIPKASMS (312 aa)) constitute a PKS/mFAS DH domain. Residues 1316–1594 (LIRGHIIAQT…ISYVKIPKAS (279 aa)) form a product template (PT) domain region. The active-site Proton acceptor; for dehydratase activity is His-1320. The interval 1447 to 1596 (EVDEVLQNRN…YVKIPKASMS (150 aa)) is C-terminal hotdog fold. Catalysis depends on Asp-1504, which acts as the Proton donor; for dehydratase activity. Residues 1665–1739 (GQLTQRIKSI…SLIKCVRKAM (75 aa)) enclose the Carrier domain. Ser-1699 carries the O-(pantetheine 4'-phosphoryl)serine modification. Positions 1742–1780 (DADSAEYTTEQSTSEAADSDDKSTNYTTPSTPGEEALDM) are disordered. Polar residues predominate over residues 1747 to 1757 (EYTTEQSTSEA). The interval 1963 to 2151 (DWPLNRLFYR…VGYGHVDWTD (189 aa)) is methyltransferase domain. An NADPH-binding (R) domain region spans residues 2230-2473 (VTGATGSLGC…LSWTPVDVVA (244 aa)).

It catalyses the reaction 4 malonyl-CoA + acetyl-CoA + AH2 + S-adenosyl-L-methionine + 3 H(+) = 2,4-dihydroxy-3-methyl-6-(2-oxopropyl)benzaldehyde + A + S-adenosyl-L-homocysteine + 4 CO2 + 5 CoA + H2O. It functions in the pathway secondary metabolite biosynthesis. Its function is as follows. Non-reducing polyketide synthase; part of the gene cluster that mediates the biosynthesis of the antibiotic 2,4-dihydroxy-3-methyl-6-(2-oxopropyl)benzaldehyde (DHMBA) and its derivatives. The direct non-reducing polyketide synthase dbaI product is 2,4-dihydroxy-3-methyl-6-(2-oxopropyl)benzaldehyde (DHMBA), produced by condensation of one acetyl-CoA starter unit with 4 malonyl-CoA units and one methylation step. The FAD-dependent monooxygenase dbaH is responsible for the synthesis of yellow pigments derived from the oxidation of DHMBA. The roles of dbaB, C, E and F have still to be determined. This is Non-reducing polyketide synthase dbaI from Emericella nidulans (strain FGSC A4 / ATCC 38163 / CBS 112.46 / NRRL 194 / M139) (Aspergillus nidulans).